A 258-amino-acid chain; its full sequence is Regulatory protein RecX (258 aa).

It belongs to the RecX family.

It is found in the cytoplasm. Modulates RecA activity. This chain is Regulatory protein RecX, found in Streptococcus equi subsp. equi (strain 4047).